The chain runs to 501 residues: Dipeptide and tripeptide permease B (501 aa).

Residues 1–27 (MRPSAPTGLLQQPKPFFMIFFVELWER) are Cytoplasmic-facing. Residues 28–48 (FGYYGVQGILAVFFVQQLGFS) traverse the membrane as a helical segment. Residues 49 to 52 (QEQS) lie on the Periplasmic side of the membrane. The helical transmembrane segment at 53-73 (FITFGAFSALVYGLISVGGYV) threads the bilayer. At 74 to 82 (GDHVLGTKR) the chain is on the cytoplasmic side. The chain crosses the membrane as a helical span at residues 83–103 (TMVLGAIVLVIGYFMTGMSIY). Residues 104–106 (NPD) lie on the Periplasmic side of the membrane. The chain crosses the membrane as a helical span at residues 107 to 127 (LIFYALGTIAVGNCLFKANPA). Residues 128–146 (SLLAKCYERGDPRLDGAFT) are Cytoplasmic-facing. Residues 147-167 (LFYMSINIGSLISLSLAPVIA) form a helical membrane-spanning segment. Over 168–172 (DHYGY) the chain is Periplasmic. The helical transmembrane segment at 173–193 (TVTYNLCGVGLVIALLTFFAC) threads the bilayer. The Cytoplasmic segment spans residues 194–211 (RHMVRDIGSEPDHLPLDY). Residues 212-232 (GKLLLVLLGSVALVFFCAWLM) form a helical membrane-spanning segment. A topological domain (periplasmic) is located at residue histidine 233. The chain crosses the membrane as a helical span at residues 234–254 (HVVIANMVLMTVTLAVVIFFF). The Cytoplasmic portion of the chain corresponds to 255 to 267 (REAFKLDAVARNK). The helical transmembrane segment at 268–288 (MYVAFVLMLEAVVFYVLYAQM) threads the bilayer. The Periplasmic segment spans residues 289–311 (PTSLNFFAINNMHHEMLGMSVNP). Residues 312–332 (ISFQALNPFWVVVGSPVLAMI) form a helical membrane-spanning segment. Over 333 to 350 (YTRLGSKGRDLTMPLKFT) the chain is Cytoplasmic. Residues 351 to 371 (LGMLFCSLGFLTAAASGIWFA) traverse the membrane as a helical segment. Residues 372–380 (DAQGLTSPW) are Periplasmic-facing. A helical membrane pass occupies residues 381-401 (FMVLIYLFQSLGELMISALGL). Over 402–411 (AMVAALVPQR) the chain is Cytoplasmic. Residues 412–432 (LMGFILGMWFLTQAMASLLGG) form a helical membrane-spanning segment. The Periplasmic portion of the chain corresponds to 433–456 (YVATFTAVPQGVTDPLQTLPIYTD). A helical membrane pass occupies residues 457-477 (VFGKIGLVTLLVAVVMALMVP). Over 478 to 501 (WLNRMMHAGQGEEGEDLLSQQAKA) the chain is Cytoplasmic.

This sequence belongs to the major facilitator superfamily. Proton-dependent oligopeptide transporter (POT/PTR) (TC 2.A.17) family. DtpB subfamily.

It localises to the cell inner membrane. Functionally, proton-dependent permease that transports di- and tripeptides. This chain is Dipeptide and tripeptide permease B, found in Aeromonas hydrophila subsp. hydrophila (strain ATCC 7966 / DSM 30187 / BCRC 13018 / CCUG 14551 / JCM 1027 / KCTC 2358 / NCIMB 9240 / NCTC 8049).